The primary structure comprises 213 residues: Transcription antitermination protein NusB (213 aa).

It belongs to the NusB family.

In terms of biological role, involved in transcription antitermination. Required for transcription of ribosomal RNA (rRNA) genes. Binds specifically to the boxA antiterminator sequence of the ribosomal RNA (rrn) operons. The protein is Transcription antitermination protein NusB of Nostoc punctiforme (strain ATCC 29133 / PCC 73102).